The sequence spans 269 residues: Formamidopyrimidine-DNA glycosylase (269 aa).

The Schiff-base intermediate with DNA role is filled by P2. The active-site Proton donor is E3. The Proton donor; for beta-elimination activity role is filled by K57. Residues H90, R109, and R150 each contribute to the DNA site. An FPG-type zinc finger spans residues 235-269 (QVYGKAGEQCPNCAELIQELKIGQRNTFYCSSCQV). R259 acts as the Proton donor; for delta-elimination activity in catalysis.

Belongs to the FPG family. Monomer. It depends on Zn(2+) as a cofactor.

It catalyses the reaction Hydrolysis of DNA containing ring-opened 7-methylguanine residues, releasing 2,6-diamino-4-hydroxy-5-(N-methyl)formamidopyrimidine.. The catalysed reaction is 2'-deoxyribonucleotide-(2'-deoxyribose 5'-phosphate)-2'-deoxyribonucleotide-DNA = a 3'-end 2'-deoxyribonucleotide-(2,3-dehydro-2,3-deoxyribose 5'-phosphate)-DNA + a 5'-end 5'-phospho-2'-deoxyribonucleoside-DNA + H(+). In terms of biological role, involved in base excision repair of DNA damaged by oxidation or by mutagenic agents. Acts as a DNA glycosylase that recognizes and removes damaged bases. Has a preference for oxidized purines, such as 7,8-dihydro-8-oxoguanine (8-oxoG). Has AP (apurinic/apyrimidinic) lyase activity and introduces nicks in the DNA strand. Cleaves the DNA backbone by beta-delta elimination to generate a single-strand break at the site of the removed base with both 3'- and 5'-phosphates. The sequence is that of Formamidopyrimidine-DNA glycosylase from Vibrio atlanticus (strain LGP32) (Vibrio splendidus (strain Mel32)).